The primary structure comprises 1288 residues: Pre-mRNA-splicing factor RSE1 (1288 aa).

The segment covering 725–740 (VDDEGEEEEEQDDEES) has biased composition (acidic residues). The tract at residues 725–744 (VDDEGEEEEEQDDEESLGGP) is disordered.

This sequence belongs to the RSE1 family. In terms of assembly, associated with the spliceosome.

It is found in the nucleus. Its function is as follows. Involved in pre-mRNA splicing and cell cycle control. This is Pre-mRNA-splicing factor RSE1 (RSE1) from Eremothecium gossypii (strain ATCC 10895 / CBS 109.51 / FGSC 9923 / NRRL Y-1056) (Yeast).